Consider the following 1828-residue polypeptide: Replicase large subunit (1828 aa).

Residues 61–812 (RRDLSQEQLQ…QASSVTETSD (752 aa)) form a methyltransferase region. The Alphavirus-like MT domain maps to 82–302 (VSSNCERGTH…HNLNQLMKYL (221 aa)). Residues 701–728 (AAKHLEKRKEVAQQAVVEAVEAVRELRK) are a coiled coil. The 159-residue stretch at 996-1154 (FMMNELVIYR…KLAIDETEYV (159 aa)) folds into the (+)RNA virus helicase ATP-binding domain. The tract at residues 1026-1289 (DGVPGCGKST…RHRRSLVYYT (264 aa)) is helicase. Residues 1155 to 1320 (RLTYRSPVDV…MKNLCSELTK (166 aa)) enclose the (+)RNA virus helicase C-terminal domain. Residues 1432–1496 (KLQEAVNEFE…KKETRLLHEL (65 aa)) adopt a coiled-coil conformation. Residues 1581–1694 (FNAFEIDFSK…LFPKHLTIED (114 aa)) enclose the RdRp catalytic domain.

This sequence belongs to the ssRNA positive-strand viruses RNA-directed RNA polymerase family. Heterodimer of a large and a small subunit.

The catalysed reaction is RNA(n) + a ribonucleoside 5'-triphosphate = RNA(n+1) + diphosphate. The enzyme catalyses ATP + H2O = ADP + phosphate + H(+). Its function is as follows. Is an RNA-dependent RNA polymerase active in viral RNA replication. Functionally, is a methyltransferase active in RNA capping and an RNA helicase. Methyltransferase displays a cytoplasmic capping enzyme activity. This function is necessary since all viral RNAs are synthesized in the cytoplasm, and host capping enzymes are restricted to the nucleus. Helicase region probably exhibits NTPase and RNA unwinding activities (Potential). The sequence is that of Replicase large subunit (rep) from Hordeum vulgare (Barley).